The primary structure comprises 892 residues: Zinc finger protein 473 homolog (892 aa).

The 79-residue stretch at 23 to 101 (ETLKDLAMDF…TKSSPLQSGF (79 aa)) folds into the KRAB domain. Polar residues-rich tracts occupy residues 66 to 76 (DTSQPSLTSQP) and 84 to 97 (ATST…SSPL). Disordered regions lie at residues 66-97 (DTSQ…SSPL) and 134-203 (GDPE…DSVQ). Basic and acidic residues-rich tracts occupy residues 138 to 156 (SLPR…HQSP) and 190 to 203 (KESR…DSVQ). 2 C2H2-type zinc fingers span residues 209-231 (YKCS…WVLH) and 265-287 (YTCQ…QKIH). The segment covering 297–308 (SDSNLEGLSRSP) has biased composition (polar residues). The segment at 297-370 (SDSNLEGLSR…HPKPLRHQKT (74 aa)) is disordered. 2 stretches are compositionally biased toward basic and acidic residues: residues 313–323 (GKQRLSKDTDS) and 332–353 (QDQE…ESQP). 8 C2H2-type zinc fingers span residues 377–399 (FRCK…QRAH), 404–426 (YKCA…RKSH), 432–454 (CECQ…QAIH), 460–482 (YKCD…QRIH), 488–510 (HKCS…QRVH), 516–538 (HQCP…RLRH), 544–566 (FGCA…NKIH), and 572–594 (YECK…LSIH). Residue K476 forms a Glycyl lysine isopeptide (Lys-Gly) (interchain with G-Cter in SUMO2) linkage. A Glycyl lysine isopeptide (Lys-Gly) (interchain with G-Cter in SUMO2) cross-link involves residue K602. The C2H2-type 11; degenerate zinc-finger motif lies at 697–719 (FKCDIYNRAFKQRAHLSKHQLIH). 6 C2H2-type zinc fingers span residues 725–747 (FKCN…QKTH), 753–775 (FECS…QKIH), 781–803 (FKCG…QRIH), 809–831 (YVCQ…LRIH), 837–859 (YTCG…ERIH), and 865–887 (YACG…QRIH).

It belongs to the krueppel C2H2-type zinc-finger protein family. As to quaternary structure, interacts with the SLBP/pre-mRNA complex but not with SLBP alone. Interacts with LSM11 in a U7 snRNP-dependent manner.

It localises to the nucleus. In terms of biological role, involved in histone 3'-end pre-mRNA processing by associating with U7 snRNP and interacting with SLBP/pre-mRNA complex. Increases histone 3'-end pre-mRNA processing but has no effect on U7 snRNP levels, when overexpressed. Required for cell cycle progression from G1 to S phases. This chain is Zinc finger protein 473 homolog (Znf473), found in Mus musculus (Mouse).